Here is a 370-residue protein sequence, read N- to C-terminus: Biotin synthase (370 aa).

In terms of domain architecture, Radical SAM core spans 79 to 314; sequence CCGNVVDLCS…KQIIRYAGGR (236 aa). Residues cysteine 97, cysteine 101, and cysteine 104 each coordinate [4Fe-4S] cluster. Cysteine 142, cysteine 179, cysteine 239, and arginine 309 together coordinate [2Fe-2S] cluster.

Belongs to the radical SAM superfamily. Biotin synthase family. As to quaternary structure, homodimer. [4Fe-4S] cluster is required as a cofactor. [2Fe-2S] cluster serves as cofactor.

The catalysed reaction is (4R,5S)-dethiobiotin + (sulfur carrier)-SH + 2 reduced [2Fe-2S]-[ferredoxin] + 2 S-adenosyl-L-methionine = (sulfur carrier)-H + biotin + 2 5'-deoxyadenosine + 2 L-methionine + 2 oxidized [2Fe-2S]-[ferredoxin]. It participates in cofactor biosynthesis; biotin biosynthesis; biotin from 7,8-diaminononanoate: step 2/2. Its function is as follows. Catalyzes the conversion of dethiobiotin (DTB) to biotin by the insertion of a sulfur atom into dethiobiotin via a radical-based mechanism. The chain is Biotin synthase from Trichodesmium erythraeum (strain IMS101).